A 248-amino-acid chain; its full sequence is Ras-related protein RSR1 (248 aa).

A GTP-binding site is contributed by 10–17 (GAGGVGKS). The Effector region signature appears at 32–40 (YDPTIEDSY). Residues 57-61 (DTAGV) and 116-119 (NKCD) each bind GTP. Positions 182-248 (LQKQQQQQQQ…SSGSKFCTII (67 aa)) are disordered. Residues 184-214 (KQQQQQQQEQDAEGQQQQQKSGKSKSSATQK) are compositionally biased toward low complexity. Composition is skewed to polar residues over residues 219–231 (DGQT…LKQS) and 238–248 (SSSGSKFCTII). A Cysteine methyl ester modification is found at cysteine 245. The S-geranylgeranyl cysteine moiety is linked to residue cysteine 245. Residues 246–248 (TII) constitute a propeptide, removed in mature form.

Belongs to the small GTPase superfamily. Ras family.

The protein localises to the cell membrane. It carries out the reaction GTP + H2O = GDP + phosphate + H(+). With respect to regulation, alternates between an inactive form bound to GDP and an active form bound to GTP. Activated by a guanine nucleotide-exchange factor (GEF) and inactivated by a GTPase-activating protein (GAP). Ras-related protein which binds GDP/GTP and possesses intrinsic GTPase activity. Involved in both yeast and hypha development. In the yeast phase, it is required for normal (polar) bud site selection and is involved in cell morphogenesis; in the yeast-mycelial transition it is involved in germ tube emergence; and in the development of the hyphae it is involved in cell elongation. This chain is Ras-related protein RSR1 (RSR1), found in Candida albicans (Yeast).